We begin with the raw amino-acid sequence, 357 residues long: 4-hydroxy-3-methylbut-2-en-1-yl diphosphate synthase (flavodoxin) (357 aa).

[4Fe-4S] cluster is bound by residues cysteine 264, cysteine 267, cysteine 299, and glutamate 306.

The protein belongs to the IspG family. It depends on [4Fe-4S] cluster as a cofactor.

It carries out the reaction (2E)-4-hydroxy-3-methylbut-2-enyl diphosphate + oxidized [flavodoxin] + H2O + 2 H(+) = 2-C-methyl-D-erythritol 2,4-cyclic diphosphate + reduced [flavodoxin]. It participates in isoprenoid biosynthesis; isopentenyl diphosphate biosynthesis via DXP pathway; isopentenyl diphosphate from 1-deoxy-D-xylulose 5-phosphate: step 5/6. Converts 2C-methyl-D-erythritol 2,4-cyclodiphosphate (ME-2,4cPP) into 1-hydroxy-2-methyl-2-(E)-butenyl 4-diphosphate. In Campylobacter jejuni subsp. jejuni serotype O:23/36 (strain 81-176), this protein is 4-hydroxy-3-methylbut-2-en-1-yl diphosphate synthase (flavodoxin).